Here is a 255-residue protein sequence, read N- to C-terminus: Hydroxyacylglutathione hydrolase (255 aa).

Zn(2+)-binding residues include H56, H58, D60, H61, H114, D133, and H171.

It belongs to the metallo-beta-lactamase superfamily. Glyoxalase II family. As to quaternary structure, monomer. It depends on Zn(2+) as a cofactor.

The enzyme catalyses an S-(2-hydroxyacyl)glutathione + H2O = a 2-hydroxy carboxylate + glutathione + H(+). Its pathway is secondary metabolite metabolism; methylglyoxal degradation; (R)-lactate from methylglyoxal: step 2/2. Thiolesterase that catalyzes the hydrolysis of S-D-lactoyl-glutathione to form glutathione and D-lactic acid. The chain is Hydroxyacylglutathione hydrolase from Rhodopseudomonas palustris (strain BisB5).